The following is a 464-amino-acid chain: ATP synthase subunit beta (464 aa).

154–161 (GGAGVGKT) is a binding site for ATP.

This sequence belongs to the ATPase alpha/beta chains family. In terms of assembly, F-type ATPases have 2 components, CF(1) - the catalytic core - and CF(0) - the membrane proton channel. CF(1) has five subunits: alpha(3), beta(3), gamma(1), delta(1), epsilon(1). CF(0) has three main subunits: a(1), b(2) and c(9-12). The alpha and beta chains form an alternating ring which encloses part of the gamma chain. CF(1) is attached to CF(0) by a central stalk formed by the gamma and epsilon chains, while a peripheral stalk is formed by the delta and b chains.

The protein localises to the cell membrane. The enzyme catalyses ATP + H2O + 4 H(+)(in) = ADP + phosphate + 5 H(+)(out). Produces ATP from ADP in the presence of a proton gradient across the membrane. The catalytic sites are hosted primarily by the beta subunits. The sequence is that of ATP synthase subunit beta from Mycoplasmopsis synoviae (strain 53) (Mycoplasma synoviae).